The chain runs to 270 residues: Cyclic AMP-dependent transcription factor ATF-1 (270 aa).

A disordered region spans residues 1-91 (MEDSHKSNTS…DGENPGVSAV (91 aa)). Over residues 9-21 (TSETAPQSGSTVQ) the composition is skewed to polar residues. The 60-residue stretch at 31-90 (QVSSLSESEESQDSSDSIGSSQKTHGILARRPSYRKILKDLSSEDIRGRKGDGENPGVSA) folds into the KID domain. Ser63 is modified (phosphoserine; by CaMK1, CDK3, RPS6KA4 and RPS6KA5). The segment covering 67–83 (ILKDLSSEDIRGRKGDG) has biased composition (basic and acidic residues). Ser197 is modified (phosphoserine; by HIPK2). Glycyl lysine isopeptide (Lys-Gly) (interchain with G-Cter in SUMO2) cross-links involve residues Lys207 and Lys214. Residues 212–270 (QLKREIRLMKNREAARECRRKKKEYVKCLENRVAVLENQNKTLIEELKTLKDLYSNKSV) enclose the bZIP domain. Residues 214–238 (KREIRLMKNREAARECRRKKKEYVK) are basic motif. The interval 240-261 (LENRVAVLENQNKTLIEELKTL) is leucine-zipper.

It belongs to the bZIP family. ATF subfamily. Binds DNA as a dimer. Interacts with HIPK2 and CDK3. Interacts with MOTS-c, a peptide produced by the mitochondrially encoded 12S rRNA MT-RNR1; the interaction occurs in the nucleus following metabolic stress. Post-translationally, phosphorylated at Ser-197 by HIPK2 in response to genotoxic stress. This phosphorylation promotes transcription repression of FTH1 and other antioxidant detoxification genes. The CDK3-mediated phosphorylation at Ser-63 promotes its transactivation and transcriptional activities. Phosphorylated at Ser-63 by RPS6KA4 and RPS6KA5 in response to mitogenic or stress stimuli.

The protein resides in the nucleus. This protein binds the cAMP response element (CRE) (consensus: 5'-GTGACGT[AC][AG]-3'), a sequence present in many viral and cellular promoters. Mediates PKA-induced stimulation of CRE-reporter genes. Represses the expression of FTH1 and other antioxidant detoxification genes. Triggers cell proliferation and transformation. The chain is Cyclic AMP-dependent transcription factor ATF-1 (ATF1) from Bos taurus (Bovine).